Consider the following 204-residue polypeptide: 3-isopropylmalate dehydratase small subunit (204 aa).

Belongs to the LeuD family. LeuD type 1 subfamily. In terms of assembly, heterodimer of LeuC and LeuD.

The enzyme catalyses (2R,3S)-3-isopropylmalate = (2S)-2-isopropylmalate. It functions in the pathway amino-acid biosynthesis; L-leucine biosynthesis; L-leucine from 3-methyl-2-oxobutanoate: step 2/4. Catalyzes the isomerization between 2-isopropylmalate and 3-isopropylmalate, via the formation of 2-isopropylmaleate. This Vesicomyosocius okutanii subsp. Calyptogena okutanii (strain HA) protein is 3-isopropylmalate dehydratase small subunit.